A 289-amino-acid polypeptide reads, in one-letter code: Myoblast determination protein 1 homolog A (289 aa).

Positions 95-146 (DRRKAATMRERRRLSKVNEAFETLKRYTSTNPNQRLPKVEILRNAIRYIESL) constitute a bHLH domain. The interval 165–212 (SGDSDASSPRSNCSDGMMDYNSPPCGSRRRNSYDSSFYSDSPNDSRLG) is disordered. 2 stretches are compositionally biased toward polar residues: residues 168-178 (SDASSPRSNCS) and 197-208 (YDSSFYSDSPND).

In terms of assembly, efficient DNA binding requires dimerization with another bHLH protein.

It is found in the nucleus. May act as a transcriptional activator that promotes transcription of muscle-specific target genes and plays a role in muscle differentiation. This is Myoblast determination protein 1 homolog A (myod1-a) from Xenopus laevis (African clawed frog).